A 701-amino-acid polypeptide reads, in one-letter code: Elongation factor G (701 aa).

One can recognise a tr-type G domain in the interval 6–285 (HKVRNIGIMA…AVVAYLPNPL (280 aa)). Residues 15-22 (AHIDAGKT), 79-83 (DNPGH), and 133-136 (NKMD) contribute to the GTP site.

This sequence belongs to the TRAFAC class translation factor GTPase superfamily. Classic translation factor GTPase family. EF-G/EF-2 subfamily.

Its subcellular location is the cytoplasm. Functionally, catalyzes the GTP-dependent ribosomal translocation step during translation elongation. During this step, the ribosome changes from the pre-translocational (PRE) to the post-translocational (POST) state as the newly formed A-site-bound peptidyl-tRNA and P-site-bound deacylated tRNA move to the P and E sites, respectively. Catalyzes the coordinated movement of the two tRNA molecules, the mRNA and conformational changes in the ribosome. The sequence is that of Elongation factor G (fusA) from Micrococcus luteus (Micrococcus lysodeikticus).